Reading from the N-terminus, the 104-residue chain is MVSYKARISLSGTEHRVVDRVCNEIKEIASRTGVEIHGPMPLPTKRLVVPVRKSPDGEGTNTWDHWEMRIHKRLIDVDADERTLRQLMRIPIPDGVQIEIQIKS.

This sequence belongs to the universal ribosomal protein uS10 family. In terms of assembly, part of the 30S ribosomal subunit.

Its function is as follows. Involved in the binding of tRNA to the ribosomes. This is Small ribosomal subunit protein uS10 from Thermoplasma acidophilum (strain ATCC 25905 / DSM 1728 / JCM 9062 / NBRC 15155 / AMRC-C165).